Here is a 921-residue protein sequence, read N- to C-terminus: MPPKAPRRAAAAEPPPPPPPPPREDDPAQDSGPEELPLARLEFEEIEEPEFIALCQKLKVPDHVRERAWLTWEKVSSVDGILEGYIQKKKELWGICIFIAAVDLDEMPFTFTELQKSIETSVYKFFDLLKEIDTSTKVDNAMSRLLKKYNVLCALYSKLERTCELIYLTQPSSALSTEINSMLVLKISWITFLLAKGEVLQMEDDLVISFQLMLCVVDYFIKFSPPALLREPYKTAAIPINGSPRTPRRGQNRSARIAKQLENDTRIIEVLCKEHECNIDEVKNVYFKNFIPFINSLGIVSSNGLPEVESLSKRYEEVYLKNKDLDARLFLDHDKTLQTDPIDSFETERTPRKNNPDEEANVVTPHTPVRTVMNTIQQLMVILNSASDQPSENLISYFNNCTVNPKENILKRVKDVGHIFKEKFANAVGQGCVDIGVQRYKLGVRLYYRVMESMLKSEEERLSIQNFSKLLNDNIFHMSLLACALEVVMATYSRSTLQHLDSGTDLSFPWILNVLNLKAFDFYKVIESFIKVEANLTREMIKHLERCEHRIMESLAWLSDSPLFDLIKQSKDGEGPDNLEPACPLSLPLQGNHTAADMYLSPLRSPKKRTSTTRVNSAANTETQAASAFHTQKPLKSTSLALFYKKVYRLAYLRLNTLCARLLSDHPELEHIIWTLFQHTLQNEYELMRDRHLDQIMMCSMYGICKVKNIDLKFKIIVTAYKDLPHAAQETFKRVLIREEEFDSIIVFYNSVFMQRLKTNILQYASTRPPTLSPIPHIPRSPYKFSSSPLRIPGGNIYISPLKSPYKISEGLPTPTKMTPRSRILVSIGESFGTSEKFQKINQMVCNSDRVLKRSAEGGNPPKPLKKLRFDIEGADEADGSKHLPAESKFQQKLAEMTSTRTRMQKQRMNESKDVSNKEEK.

The tract at residues 1-36 is disordered; that stretch reads MPPKAPRRAAAAEPPPPPPPPPREDDPAQDSGPEEL. The residue at position 2 (Pro-2) is a N,N-dimethylproline; by NTM1. Residues Ser-31 and Ser-243 each carry the phosphoserine modification. 4 positions are modified to phosphothreonine: Thr-246, Thr-350, Thr-364, and Thr-367. Residues 341–360 are disordered; the sequence is PIDSFETERTPRKNNPDEEA. A compositionally biased stretch (basic and acidic residues) spans 346–356; the sequence is ETERTPRKNNP. Residues 367 to 573 are domain A; the sequence is TPVRTVMNTI…FDLIKQSKDG (207 aa). The segment at 367–764 is pocket; binds T and E1A; the sequence is TPVRTVMNTI…QRLKTNILQY (398 aa). Position 561 is a phosphoserine; by CDK2 (Ser-561). The interval 574 to 632 is spacer; that stretch reads EGPDNLEPACPLSLPLQGNHTAADMYLSPLRSPKKRTSTTRVNSAANTETQAASAFHTQ. Residues Ser-601, Ser-605, and Ser-617 each carry the phosphoserine modification. The interval 633-764 is domain B; the sequence is KPLKSTSLAL…QRLKTNILQY (132 aa). The segment at 756-921 is interaction with LIMD1; the sequence is RLKTNILQYA…SKDVSNKEEK (166 aa). The interval 764–921 is domain; mediates interaction with E4F1; the sequence is YASTRPPTLS…SKDVSNKEEK (158 aa). Ser-773, Ser-781, Ser-788, and Ser-800 each carry phosphoserine. Lys-803 carries the post-translational modification N6-methyllysine; by SMYD2. At Ser-804 the chain carries Phosphoserine. Residues Thr-814, Thr-816, Thr-819, and Thr-834 each carry the phosphothreonine modification. Residue Ser-848 is modified to Phosphoserine. An N6-methyllysine; by SMYD2 modification is found at Lys-853. Positions 853–869 match the Bipartite nuclear localization signal motif; the sequence is KRSAEGGNPPKPLKKLR. N6-acetyllysine; by PCAF occurs at positions 866 and 867. Positions 872 to 921 are disordered; the sequence is IEGADEADGSKHLPAESKFQQKLAEMTSTRTRMQKQRMNESKDVSNKEEK. Basic and acidic residues predominate over residues 908–921; the sequence is RMNESKDVSNKEEK.

This sequence belongs to the retinoblastoma protein (RB) family. As to quaternary structure, the hypophosphorylated form interacts with and sequesters the E2F1 transcription factor, thereby inhibiting E2F1 transcription. Interacts with heterodimeric E2F/DP transcription factor complexes containing TFDP1 and either E2F1/E2F, E2F3, E2F4 or E2F5, or TFDP2 and E2F4. Interacts (when hyperphosphorylated and hypophosphorylated) with PKP3; the interaction inhibits RB1 interaction with and repression of the transcription factor E2F1, potentially via sequestering RB1 to the cytoplasm. The unphosphorylated form interacts with EID1, ARID3B, KDM5A, SUV39H1, MJD2A/JHDM3A and THOC1. Interacts with the N-terminal domain of TAF1. Interacts with SNW1, ATAD5, AATF, DNMT1, LIN9, LMNA, KMT5B, KMT5C, PELP1, UHRF2, TMPO-alpha and USP4. Interacts with GRIP1 and UBR4. Interacts with ARID4A and KDM5B. Interacts with E4F1 and LIMD1. Interacts with SMARCA4/BRG1 and HDAC1. Interacts with USP4. Interacts (when methylated at Lys-853) with L3MBTL1. Binds to CDK1 and CDK2. Interacts with CHEK2; phosphorylates RB1. Interacts with PRMT2. Interacts with CEBPA. P-TEFB complex interacts with RB1; promotes phosphorylation of RB1. Interacts with RBBP9; the interaction disrupts RB1 binding to E2F1. Interacts with KAT2B/PCAF and EP300/P300. Interacts with PAX5. Interacts (phosphorylated and unphosphorylated) with BLCAP. May interact with NDC80. (Microbial infection) Interacts with adenovirus E1a protein. In terms of assembly, (Microbial infection) Interacts with SV40 large T antigen. Post-translationally, phosphorylated. Phosphorylated by CDK6 and CDK4, and subsequently by CDK2 at Ser-561 in G1, thereby releasing E2F1 which is then able to activate cell growth. Dephosphorylated at the late M phase. Phosphorylation of threonine residues in domain C promotes interaction between the C-terminal domain C and the Pocket domain, and thereby inhibits interactions with heterodimeric E2F/DP transcription factor complexes. Dephosphorylated at Ser-788 by calcineruin upon calcium stimulation. CDK3/cyclin-C-mediated phosphorylation at Ser-800 and Ser-804 is required for G0-G1 transition. Phosphorylated by CDK1 and CDK2 upon TGFB1-mediated apoptosis. Monomethylation at Lys-803 by SMYD2 enhances phosphorylation at Ser-800 and Ser-804, and promotes cell cycle progression. Monomethylation at Lys-853 by SMYD2 promotes interaction with L3MBTL1. N-terminus is methylated by METTL11A/NTM1. In terms of processing, acetylated in the skin. Acetylation at Lys-866 and Lys-867 regulates subcellular localization during keratinocytes differentiation. Expressed in the cell nuclei of renal tubules, hepatocytes and skeletal muscles. Expressed in skin (at protein level).

It localises to the nucleus. It is found in the cytoplasm. Tumor suppressor that is a key regulator of the G1/S transition of the cell cycle. The hypophosphorylated form binds transcription regulators of the E2F family, preventing transcription of E2F-responsive genes. Both physically blocks E2Fs transactivating domain and recruits chromatin-modifying enzymes that actively repress transcription. Cyclin and CDK-dependent phosphorylation of RB1 induces its dissociation from E2Fs, thereby activating transcription of E2F responsive genes and triggering entry into S phase. RB1 also promotes the G0-G1 transition upon phosphorylation and activation by CDK3/cyclin-C. Directly involved in heterochromatin formation by maintaining overall chromatin structure and, in particular, that of constitutive heterochromatin by stabilizing histone methylation. Recruits and targets histone methyltransferases SUV39H1, KMT5B and KMT5C, leading to epigenetic transcriptional repression. Controls histone H4 'Lys-20' trimethylation. Inhibits the intrinsic kinase activity of TAF1. Mediates transcriptional repression by SMARCA4/BRG1 by recruiting a histone deacetylase (HDAC) complex to the c-FOS promoter. In resting neurons, transcription of the c-FOS promoter is inhibited by BRG1-dependent recruitment of a phospho-RB1-HDAC1 repressor complex. Upon calcium influx, RB1 is dephosphorylated by calcineurin, which leads to release of the repressor complex. This Mus musculus (Mouse) protein is Retinoblastoma-associated protein (Rb1).